The primary structure comprises 157 residues: SsrA-binding protein (157 aa).

The disordered stretch occupies residues 132–157 (KLHDKRETEKKRDWSREKGRLLRSRG). Residues 135–151 (DKRETEKKRDWSREKGR) are compositionally biased toward basic and acidic residues.

The protein belongs to the SmpB family.

The protein resides in the cytoplasm. Required for rescue of stalled ribosomes mediated by trans-translation. Binds to transfer-messenger RNA (tmRNA), required for stable association of tmRNA with ribosomes. tmRNA and SmpB together mimic tRNA shape, replacing the anticodon stem-loop with SmpB. tmRNA is encoded by the ssrA gene; the 2 termini fold to resemble tRNA(Ala) and it encodes a 'tag peptide', a short internal open reading frame. During trans-translation Ala-aminoacylated tmRNA acts like a tRNA, entering the A-site of stalled ribosomes, displacing the stalled mRNA. The ribosome then switches to translate the ORF on the tmRNA; the nascent peptide is terminated with the 'tag peptide' encoded by the tmRNA and targeted for degradation. The ribosome is freed to recommence translation, which seems to be the essential function of trans-translation. This chain is SsrA-binding protein, found in Rhodopseudomonas palustris (strain ATCC BAA-98 / CGA009).